Consider the following 147-residue polypeptide: Protein SOB FIVE-LIKE 2 (147 aa).

An SOFL-A motif is present at residues Ser18–Tyr23. Residues His32–Lys147 form a disordered region. The span at Val37–Met77 shows a compositional bias: acidic residues. Positions Ser76–Pro85 match the SOFL-B motif. Residues Thr78–Ser93 show a composition bias toward polar residues. Residues Asn96 to Lys106 are compositionally biased toward low complexity. The segment covering Asn114–Ala131 has biased composition (basic and acidic residues).

The protein belongs to the SOFL plant protein family. Predominantly expressed in the vascular tissues of seedlings, developing leaves, flowers and siliques, but barely detectable in roots and stems.

The protein localises to the cytoplasm. The protein resides in the nucleus. Its function is as follows. Involved in cytokinin-mediated development. Together with SOFL2, triggers the endogenous content of specific bioactive cytokinins derived from the biosynthetic intermediates trans-zeatin riboside monophosphate (tZRMP) and N(6)-(Delta(2)-isopentenyl)adenosine monophosphate (iPRMP) such as N-glucosides trans-zeatin 7-glucoside (tZ7G), cis-zeatin 7-glucoside (cZ7G) and N(6)-(Delta(2)-isopentenyl)adenine 7-glucoside (iP7G). This is Protein SOB FIVE-LIKE 2 from Arabidopsis thaliana (Mouse-ear cress).